The primary structure comprises 429 residues: Antho-RFamide neuropeptides type 2 (429 aa).

The first 22 residues, 1–22 (MTTVSYVTILLTVLVQVLTSDA), serve as a signal peptide directing secretion. Residues 23 to 233 (KATNNKRELS…EFQGRFGRED (211 aa)) constitute a propeptide that is removed on maturation. Residues 230–371 (GREDQGRFGR…EDIAKEDQGR (142 aa)) show a composition bias toward basic and acidic residues. The tract at residues 230-429 (GREDQGRFGR…KSDDALAKIS (200 aa)) is disordered. At Gln234 the chain carries Pyrrolidone carboxylic acid. Phe237 carries the phenylalanine amide modification. A propeptide spanning residues 239–241 (RED) is cleaved from the precursor. At Gln242 the chain carries Pyrrolidone carboxylic acid. Phe245 bears the Phenylalanine amide mark. Residues 247–249 (RED) constitute a propeptide that is removed on maturation. Position 250 is a pyrrolidone carboxylic acid (Gln250). Phe253 is modified (phenylalanine amide). A propeptide spanning residues 255 to 257 (RED) is cleaved from the precursor. At Gln258 the chain carries Pyrrolidone carboxylic acid. Residue Phe261 is modified to Phenylalanine amide. The propeptide occupies 263-265 (RED). Gln266 carries the post-translational modification Pyrrolidone carboxylic acid. The residue at position 269 (Phe269) is a Phenylalanine amide. Positions 271 to 273 (RED) are excised as a propeptide. Gln274 is modified (pyrrolidone carboxylic acid). A Phenylalanine amide modification is found at Phe277. Residues 279–289 (RELQGRFGRED) constitute a propeptide that is removed on maturation. Gln290 bears the Pyrrolidone carboxylic acid mark. Phe293 is modified (phenylalanine amide). The propeptide occupies 295 to 297 (RED). A Pyrrolidone carboxylic acid modification is found at Gln298. Phe301 is modified (phenylalanine amide). Residues 303–305 (RED) constitute a propeptide that is removed on maturation. Residue Gln306 is modified to Pyrrolidone carboxylic acid. Phe309 carries the phenylalanine amide modification. A propeptide spanning residues 311–321 (RELQGRFGRED) is cleaved from the precursor. Position 322 is a pyrrolidone carboxylic acid (Gln322). A Phenylalanine amide modification is found at Phe325. Residues 327-329 (RED) constitute a propeptide that is removed on maturation. Gln330 carries the pyrrolidone carboxylic acid modification. Phe333 is modified (phenylalanine amide). Residues 335–342 (REDLAKED) constitute a propeptide that is removed on maturation. Position 343 is a pyrrolidone carboxylic acid (Gln343). Phenylalanine amide is present on Phe346. Residues 348–355 (REDLAKED) constitute a propeptide that is removed on maturation. Gln356 is subject to Pyrrolidone carboxylic acid. The residue at position 359 (Phe359) is a Phenylalanine amide. Positions 361-368 (REDIAKED) are excised as a propeptide. Gln369 bears the Pyrrolidone carboxylic acid mark. A Phenylalanine amide modification is found at Phe372. Positions 374 to 429 (RNAAAAAKKRTIDVIDIESDPKPQTRFRDGKDMQEKRKVEKKDKIEKSDDALAKIS) are excised as a propeptide. The segment covering 392–429 (SDPKPQTRFRDGKDMQEKRKVEKKDKIEKSDDALAKIS) has biased composition (basic and acidic residues).

Belongs to the FARP (FMRFamide related peptide) family.

The protein localises to the secreted. Its function is as follows. Not known but it could act as a transmitter at neuromuscular synapses. This is Antho-RFamide neuropeptides type 2 from Anthopleura elegantissima (Green aggregating anemone).